The sequence spans 403 residues: Calcium-responsive transactivator (403 aa).

The tract at residues 1-148 (MSVAFASARP…TLPTTTMSMA (148 aa)) is N-terminal auto-inhibitory domain. The SH2-binding motif lies at 50–53 (YQQI). Disordered regions lie at residues 72–111 (QSLLPAPPTQNMNLGPGGMSQTGPSQTLHSQGNLSEALGS), 152–171 (HGSAPGYSHTVPSSQNVPMQ), 224–303 (NQSS…RTFE), and 318–403 (SQQQ…NYQQ). Polar residues-rich tracts occupy residues 92–105 (QTGPSQTLHSQGNL) and 161–171 (TVPSSQNVPMQ). The tract at residues 149 to 238 (VSTHGSAPGY…GSSMMGQRPL (90 aa)) is methionine-rich intra-molecular domain. The segment covering 224 to 235 (NQSSQGSSMMGQ) has biased composition (low complexity). The interval 252–324 (YLGQEEYYSE…AQYSQQQTGY (73 aa)) is MFD domain. Residues 263-277 (YGHSQGSSEAMTPQY) are compositionally biased toward polar residues. Residues 286–296 (YSYQQSSYGEQ) show a composition bias toward low complexity. The necessary for nuclear localization stretch occupies residues 341–403 (NQQNYPGQQQ…EQGQYGNYQQ (63 aa)). The SH2-binding motif lies at 360–363 (SQYS). The SH3-binding motif lies at 378–386 (TSQTTSTAQ). The short motif at 398–401 (YGNY) is the SH2-binding element.

It belongs to the SS18 family. In terms of assembly, homodimer.

The protein resides in the nucleus. In terms of biological role, transcriptional activator which may be required for calcium-dependent dendritic growth and branching in cortical neurons. This chain is Calcium-responsive transactivator (ss18l1), found in Xenopus laevis (African clawed frog).